Reading from the N-terminus, the 118-residue chain is Fluoride-specific ion channel FluC 1 (118 aa).

A run of 4 helical transmembrane segments spans residues 5 to 25, 39 to 59, 61 to 81, and 98 to 118; these read FLLV…ISIF, FFIN…ALGP, WQLF…TFKV, and YVGL…MLGV. Glycine 71 and threonine 74 together coordinate Na(+).

The protein belongs to the fluoride channel Fluc/FEX (TC 1.A.43) family.

The protein localises to the cell membrane. It carries out the reaction fluoride(in) = fluoride(out). Na(+) is not transported, but it plays an essential structural role and its presence is essential for fluoride channel function. Fluoride-specific ion channel. Important for reducing fluoride concentration in the cell, thus reducing its toxicity. In Listeria innocua serovar 6a (strain ATCC BAA-680 / CLIP 11262), this protein is Fluoride-specific ion channel FluC 1.